A 133-amino-acid chain; its full sequence is S-adenosylmethionine decarboxylase proenzyme (133 aa).

S64 serves as the catalytic Schiff-base intermediate with substrate; via pyruvic acid. Residue S64 is modified to Pyruvic acid (Ser); by autocatalysis. The active-site Proton acceptor; for processing activity is H69. C84 serves as the catalytic Proton donor; for catalytic activity.

This sequence belongs to the prokaryotic AdoMetDC family. Type 1 subfamily. In terms of assembly, heterotetramer of two alpha and two beta chains arranged as a dimer of alpha/beta heterodimers. It depends on pyruvate as a cofactor. Post-translationally, is synthesized initially as an inactive proenzyme. Formation of the active enzyme involves a self-maturation process in which the active site pyruvoyl group is generated from an internal serine residue via an autocatalytic post-translational modification. Two non-identical subunits are generated from the proenzyme in this reaction, and the pyruvate is formed at the N-terminus of the alpha chain, which is derived from the carboxyl end of the proenzyme. The post-translation cleavage follows an unusual pathway, termed non-hydrolytic serinolysis, in which the side chain hydroxyl group of the serine supplies its oxygen atom to form the C-terminus of the beta chain, while the remainder of the serine residue undergoes an oxidative deamination to produce ammonia and the pyruvoyl group blocking the N-terminus of the alpha chain.

The enzyme catalyses S-adenosyl-L-methionine + H(+) = S-adenosyl 3-(methylsulfanyl)propylamine + CO2. It functions in the pathway amine and polyamine biosynthesis; S-adenosylmethioninamine biosynthesis; S-adenosylmethioninamine from S-adenosyl-L-methionine: step 1/1. In terms of biological role, catalyzes the decarboxylation of S-adenosylmethionine to S-adenosylmethioninamine (dcAdoMet), the propylamine donor required for the synthesis of the polyamines spermine and spermidine from the diamine putrescine. The chain is S-adenosylmethionine decarboxylase proenzyme from Sulfurihydrogenibium sp. (strain YO3AOP1).